The following is a 248-amino-acid chain: Prepilin leader peptidase/N-methyltransferase (248 aa).

The chain crosses the membrane as a helical span at residues 1-21 (MLSILFIFGLILGSFYYTAGC). Zn(2+) contacts are provided by Cys36, Cys39, Cys61, and Cys64. The next 6 membrane-spanning stretches (helical) occupy residues 68-88 (ISFM…AAGI), 90-110 (FGIS…IIVA), 114-134 (IHFM…LAAA), 143-163 (WYAG…IAAI), 178-198 (VIGF…SVLI), and 223-243 (AIAA…SFYI).

It belongs to the peptidase A24 family. The cofactor is Zn(2+).

Its subcellular location is the cell membrane. The enzyme catalyses Typically cleaves a -Gly-|-Phe- bond to release an N-terminal, basic peptide of 5-8 residues from type IV prepilin, and then N-methylates the new N-terminal amino group, the methyl donor being S-adenosyl-L-methionine.. Functionally, plays a role in type II pseudopili formation by proteolytically removing the leader sequence from substrate proteins and subsequently monomethylating the alpha-amino group of the newly exposed N-terminal phenylalanine. Substrates include proteins required for biogenesis of the type II general secretory apparatus. The polypeptide is Prepilin leader peptidase/N-methyltransferase (comC) (Bacillus subtilis (strain 168)).